A 1224-amino-acid chain; its full sequence is Coatomer subunit alpha (1224 aa).

4 WD repeats span residues 7-37 (TKSA…QLWD), 49-79 (EHDG…KVWN), 91-121 (GHLD…RVWN), and 133-163 (GHNH…RVWD). Position 173 is a phosphoserine (Ser-173). The residue at position 185 (Thr-185) is a Phosphothreonine. WD repeat units lie at residues 203–233 (GHDR…KIWR) and 247–277 (GHYN…RVWD). At Thr-591 the chain carries Phosphothreonine. Residue Arg-965 is modified to Omega-N-methylarginine. Residue Ser-1193 is modified to Phosphoserine.

Oligomeric complex that consists of at least the alpha, beta, beta', gamma, delta, epsilon and zeta subunits. Interacts with SCYL1. Interacts with JAGN1. Interacts with TMEM41B. Interacts with SVEP1. Probably interacts with PEX11A.

The protein localises to the cytoplasm. The protein resides in the golgi apparatus membrane. It is found in the cytoplasmic vesicle. It localises to the COPI-coated vesicle membrane. Its subcellular location is the secreted. In terms of biological role, the coatomer is a cytosolic protein complex that binds to dilysine motifs and reversibly associates with Golgi non-clathrin-coated vesicles, which further mediate biosynthetic protein transport from the ER, via the Golgi up to the trans Golgi network. Coatomer complex is required for budding from Golgi membranes, and is essential for the retrograde Golgi-to-ER transport of dilysine-tagged proteins. In mammals, the coatomer can only be recruited by membranes associated to ADP-ribosylation factors (ARFs), which are small GTP-binding proteins; the complex also influences the Golgi structural integrity, as well as the processing, activity, and endocytic recycling of LDL receptors. Functionally, xenin stimulates exocrine pancreatic secretion. It inhibits pentagastrin-stimulated secretion of acid, to induce exocrine pancreatic secretion and to affect small and large intestinal motility. In the gut, xenin interacts with the neurotensin receptor. The protein is Coatomer subunit alpha (COPA) of Bos taurus (Bovine).